A 318-amino-acid polypeptide reads, in one-letter code: tRNA dimethylallyltransferase (318 aa).

16-23 contacts ATP; it reads GPTASGKS. 18–23 serves as a coordination point for substrate; the sequence is TASGKS. Interaction with substrate tRNA regions lie at residues 41 to 44 and 165 to 169; these read DSRQ and QRLIR.

Belongs to the IPP transferase family. In terms of assembly, monomer. It depends on Mg(2+) as a cofactor.

It carries out the reaction adenosine(37) in tRNA + dimethylallyl diphosphate = N(6)-dimethylallyladenosine(37) in tRNA + diphosphate. Its function is as follows. Catalyzes the transfer of a dimethylallyl group onto the adenine at position 37 in tRNAs that read codons beginning with uridine, leading to the formation of N6-(dimethylallyl)adenosine (i(6)A). This chain is tRNA dimethylallyltransferase, found in Pelodictyon phaeoclathratiforme (strain DSM 5477 / BU-1).